The primary structure comprises 1087 residues: 2'-5'-oligoadenylate synthase 3 (1087 aa).

Met-1 is subject to N-acetylmethionine. The OAS domain 1 stretch occupies residues 6 to 343 (TPAAALDRFV…GDPVQSWKGP (338 aa)). Interaction with dsRNA regions lie at residues 12 to 57 (DRFV…VLKT) and 186 to 200 (ELRR…AKLK). The tract at residues 344-410 (GLPRAGCSGL…VPGMALDLSQ (67 aa)) is linker. Thr-365 carries the post-translational modification Phosphothreonine. OAS domain regions lie at residues 411–742 (IPTK…PWDV) and 750–1084 (TPAG…WPVK). Ser-804 lines the ATP pocket. Residues Asp-816, Asp-818, and Asp-888 each coordinate Mg(2+). Residues Arg-947, Lys-950, and Gln-969 each coordinate ATP.

This sequence belongs to the 2-5A synthase family. Monomer. Mg(2+) is required as a cofactor. Present at high level in placenta trophoblast.

The protein resides in the cytoplasm. It is found in the nucleus. It catalyses the reaction 3 ATP = 5'-triphosphoadenylyl-(2'-&gt;5')-adenylyl-(2'-&gt;5')-adenosine + 2 diphosphate. Its activity is regulated as follows. Produced as a latent enzyme which is activated by dsRNA generated during the course of viral infection. Strongly activated by long dsRNAs at least 50 nucleotides in length. ssRNA does not activate the enzyme. In terms of biological role, interferon-induced, dsRNA-activated antiviral enzyme which plays a critical role in cellular innate antiviral response. In addition, it may also play a role in other cellular processes such as apoptosis, cell growth, differentiation and gene regulation. Synthesizes preferentially dimers of 2'-5'-oligoadenylates (2-5A) from ATP which then bind to the inactive monomeric form of ribonuclease L (RNase L) leading to its dimerization and subsequent activation. Activation of RNase L leads to degradation of cellular as well as viral RNA, resulting in the inhibition of protein synthesis, thus terminating viral replication. Can mediate the antiviral effect via the classical RNase L-dependent pathway or an alternative antiviral pathway independent of RNase L. Displays antiviral activity against Chikungunya virus (CHIKV), Dengue virus, Sindbis virus (SINV) and Semliki forest virus (SFV). The chain is 2'-5'-oligoadenylate synthase 3 (OAS3) from Homo sapiens (Human).